A 602-amino-acid chain; its full sequence is Arginine--tRNA ligase (602 aa).

Residues 124–134 (ANPTGPVHVGR) carry the 'HIGH' region motif.

The protein belongs to the class-I aminoacyl-tRNA synthetase family.

It is found in the cytoplasm. It carries out the reaction tRNA(Arg) + L-arginine + ATP = L-arginyl-tRNA(Arg) + AMP + diphosphate. This is Arginine--tRNA ligase from Halorubrum lacusprofundi (strain ATCC 49239 / DSM 5036 / JCM 8891 / ACAM 34).